The chain runs to 359 residues: Dual-specificity RNA methyltransferase RlmN (359 aa).

Catalysis depends on E90, which acts as the Proton acceptor. The Radical SAM core domain maps to 109–342; it reads HQERYTVCIS…CTIRESKGLD (234 aa). C116 and C347 form a disulfide bridge. 3 residues coordinate [4Fe-4S] cluster: C123, C127, and C130. Residues 173 to 174, S205, 228 to 230, and N304 contribute to the S-adenosyl-L-methionine site; these read GE and SLH. C347 (S-methylcysteine intermediate) is an active-site residue.

This sequence belongs to the radical SAM superfamily. RlmN family. It depends on [4Fe-4S] cluster as a cofactor.

It localises to the cytoplasm. The catalysed reaction is adenosine(2503) in 23S rRNA + 2 reduced [2Fe-2S]-[ferredoxin] + 2 S-adenosyl-L-methionine = 2-methyladenosine(2503) in 23S rRNA + 5'-deoxyadenosine + L-methionine + 2 oxidized [2Fe-2S]-[ferredoxin] + S-adenosyl-L-homocysteine. It carries out the reaction adenosine(37) in tRNA + 2 reduced [2Fe-2S]-[ferredoxin] + 2 S-adenosyl-L-methionine = 2-methyladenosine(37) in tRNA + 5'-deoxyadenosine + L-methionine + 2 oxidized [2Fe-2S]-[ferredoxin] + S-adenosyl-L-homocysteine. Functionally, specifically methylates position 2 of adenine 2503 in 23S rRNA and position 2 of adenine 37 in tRNAs. m2A2503 modification seems to play a crucial role in the proofreading step occurring at the peptidyl transferase center and thus would serve to optimize ribosomal fidelity. The sequence is that of Dual-specificity RNA methyltransferase RlmN from Sulfurovum sp. (strain NBC37-1).